The primary structure comprises 161 residues: MRMSAKAEYAVRAMVQLATAASGTVVKTDDLAAAQGIPPQFLVDILTNLRTDRLVRSHRGREGGYELARPGTEISIADVLRCIDGPLASVRDIGLGDLPYSGPTTALTDVWRALRASMRSVLEETTLADVAGGALPEHVAQLADDYRAQESTRHGASRHGD.

In terms of domain architecture, HTH rrf2-type spans 2 to 132; sequence RMSAKAEYAV…EETTLADVAG (131 aa).

The chain is Putative HTH-type transcriptional regulator MT1325 from Mycobacterium tuberculosis (strain CDC 1551 / Oshkosh).